A 308-amino-acid polypeptide reads, in one-letter code: tRNA pseudouridine synthase B (308 aa).

Catalysis depends on Asp51, which acts as the Nucleophile.

Belongs to the pseudouridine synthase TruB family. Type 1 subfamily.

The enzyme catalyses uridine(55) in tRNA = pseudouridine(55) in tRNA. Functionally, responsible for synthesis of pseudouridine from uracil-55 in the psi GC loop of transfer RNAs. The chain is tRNA pseudouridine synthase B from Aromatoleum aromaticum (strain DSM 19018 / LMG 30748 / EbN1) (Azoarcus sp. (strain EbN1)).